Here is a 363-residue protein sequence, read N- to C-terminus: Type-1 angiotensin II receptor B (363 aa).

At methionine 1–asparagine 27 the chain is on the extracellular side. Residue asparagine 4 is glycosylated (N-linked (GlcNAc...) asparagine). 2 disulfides stabilise this stretch: cysteine 20/cysteine 274 and cysteine 103/cysteine 182. The chain crosses the membrane as a helical span at residues tyrosine 28–serine 57. The Cytoplasmic segment spans residues tyrosine 58–threonine 63. A helical membrane pass occupies residues methionine 64 to alanine 91. Residues methionine 92–aspartate 100 are Extracellular-facing. A helical transmembrane segment spans residues leucine 101–aspartate 127. Topologically, residues arginine 128–threonine 143 are cytoplasmic. The helical transmembrane segment at valine 144–isoleucine 167 threads the bilayer. The Extracellular portion of the chain corresponds to tyrosine 168–tyrosine 192. Position 169 (arginine 169) interacts with angiotensin II. N-linked (GlcNAc...) asparagine glycosylation occurs at asparagine 178. 2 residues coordinate angiotensin II: tyrosine 186 and lysine 201. The chain crosses the membrane as a helical span at residues phenylalanine 193–threonine 218. Residues leucine 219–phenylalanine 239 are Cytoplasmic-facing. The chain crosses the membrane as a helical span at residues lysine 240 to methionine 268. Topologically, residues aspartate 269–aspartate 278 are extracellular. A helical transmembrane segment spans residues isoleucine 279–phenylalanine 304. The Cytoplasmic segment spans residues phenylalanine 305–lysine 363. 2 S-palmitoyl cysteine lipidation sites follow: cysteine 346 and cysteine 362.

It belongs to the G-protein coupled receptor 1 family. Post-translationally, C-terminal Ser or Thr residues may be phosphorylated. In terms of tissue distribution, heart membranes, follicular oocytes.

It is found in the cell membrane. In terms of biological role, receptor for angiotensin II, a vasoconstricting peptide, which acts as a key regulator of blood pressure and sodium retention by the kidney. The activated receptor in turn couples to G-alpha proteins G(q) (GNAQ, GNA11, GNA14 or GNA15) and thus activates phospholipase C and increases the cytosolic Ca(2+) concentrations, which in turn triggers cellular responses such as stimulation of protein kinase C. In Xenopus laevis (African clawed frog), this protein is Type-1 angiotensin II receptor B (agtr1-b).